A 390-amino-acid chain; its full sequence is MSIRRVMHVDLDAFFVSVEQAVRPELKDKPVIVGGKPERRGVVAAASYEARKFGIHSGMPLITAKNLCPQAIFIEGNHQLYREYSEKFMLILSDFSPFLEPMGLDEAYLEVTGFESLHGSIAEMASKIRRRITAEMGINASIGIANSKVAAKIATERAKPNGQCEVPAGEEASFLAPLDIAVMPGIGKKTEQHLKSLGIDTLGKLAALPASFLKSRLGAYAPYLSNAAMGIDNRPVEMPSEAKSISRETTFETDTRNQTFLEAKLSYLSEKITATLRKRGKQARVVQIKIRFADFTTLTRQKHLGQPASGNREIFQTALSLMNGILDSDRQTVRLLGVGISDFCGPEKQLEIDPAKARLEKLDASLDKIRQKYGFSSVQTGRTYRLKDMF.

Residues 6–187 (VMHVDLDAFF…LDIAVMPGIG (182 aa)) form the UmuC domain. Mg(2+)-binding residues include Asp10 and Asp105. The active site involves Glu106.

The protein belongs to the DNA polymerase type-Y family. In terms of assembly, monomer. It depends on Mg(2+) as a cofactor.

The protein localises to the cytoplasm. It catalyses the reaction DNA(n) + a 2'-deoxyribonucleoside 5'-triphosphate = DNA(n+1) + diphosphate. In terms of biological role, poorly processive, error-prone DNA polymerase involved in untargeted mutagenesis. Copies undamaged DNA at stalled replication forks, which arise in vivo from mismatched or misaligned primer ends. These misaligned primers can be extended by PolIV. Exhibits no 3'-5' exonuclease (proofreading) activity. May be involved in translesional synthesis, in conjunction with the beta clamp from PolIII. The polypeptide is DNA polymerase IV (Dehalococcoides mccartyi (strain CBDB1)).